A 522-amino-acid polypeptide reads, in one-letter code: Echinocystic acid 23-monooxygenase (522 aa).

The chain crosses the membrane as a helical; Signal-anchor for type II membrane protein span at residues 4–24 (LPYIATSIACIVILRWALNMM). Residue N190 is glycosylated (N-linked (GlcNAc...) asparagine). Residue C470 participates in heme binding.

It belongs to the cytochrome P450 family. It depends on heme as a cofactor. As to expression, mainly expressed in flowers and flower buds, to a lesser extent in young leaves and, at low levels, in old leaves, stems and roots.

The protein resides in the membrane. It participates in secondary metabolite biosynthesis; terpenoid biosynthesis. Its function is as follows. Component of the oleanane-type triterpene saponins (e.g. saponarioside A and saponarioside B) biosynthetic pathway, leading to the production of natural products with detergent properties used as traditional sources of soap. An oxidoreductase that facilitates the oxidation of the methyl group to a carboxyl group at the C-23 position of echinocystic acid, resulting in the formation of quillaic acid (QA). The polypeptide is Echinocystic acid 23-monooxygenase (Saponaria officinalis (Common soapwort)).